A 281-amino-acid chain; its full sequence is Pantothenate synthetase (281 aa).

30 to 37 serves as a coordination point for ATP; that stretch reads MGNLHQGH. The active-site Proton donor is His-37. (R)-pantoate is bound at residue Gln-61. Residue Gln-61 coordinates beta-alanine. 149–152 provides a ligand contact to ATP; sequence GNKD. Gln-155 is a (R)-pantoate binding site. ATP is bound by residues Ile-178 and 186–189; that span reads MSSR.

It belongs to the pantothenate synthetase family. As to quaternary structure, homodimer.

Its subcellular location is the cytoplasm. The enzyme catalyses (R)-pantoate + beta-alanine + ATP = (R)-pantothenate + AMP + diphosphate + H(+). Its pathway is cofactor biosynthesis; (R)-pantothenate biosynthesis; (R)-pantothenate from (R)-pantoate and beta-alanine: step 1/1. In terms of biological role, catalyzes the condensation of pantoate with beta-alanine in an ATP-dependent reaction via a pantoyl-adenylate intermediate. This Shewanella baltica (strain OS223) protein is Pantothenate synthetase.